The sequence spans 525 residues: Glutamyl-tRNA(Gln) amidotransferase subunit A, mitochondrial (525 aa).

Active-site charge relay system residues include Lys76 and Ser168. Ser192 (acyl-ester intermediate) is an active-site residue.

It belongs to the amidase family. GatA subfamily. As to quaternary structure, subunit of the heterotrimeric GatCAB amidotransferase (AdT) complex, composed of A (QRSL1), B (GATB) and C (GATC) subunits.

It localises to the mitochondrion. The enzyme catalyses L-glutamyl-tRNA(Gln) + L-glutamine + ATP + H2O = L-glutaminyl-tRNA(Gln) + L-glutamate + ADP + phosphate + H(+). Its function is as follows. Allows the formation of correctly charged Gln-tRNA(Gln) through the transamidation of misacylated Glu-tRNA(Gln) in the mitochondria. The reaction takes place in the presence of glutamine and ATP through an activated gamma-phospho-Glu-tRNA(Gln). This is Glutamyl-tRNA(Gln) amidotransferase subunit A, mitochondrial (Qrsl1) from Rattus norvegicus (Rat).